Reading from the N-terminus, the 258-residue chain is Trans-aconitate 2-methyltransferase (258 aa).

Belongs to the methyltransferase superfamily. Tam family.

The protein resides in the cytoplasm. It catalyses the reaction trans-aconitate + S-adenosyl-L-methionine = (E)-3-(methoxycarbonyl)pent-2-enedioate + S-adenosyl-L-homocysteine. In terms of biological role, catalyzes the S-adenosylmethionine monomethyl esterification of trans-aconitate. This chain is Trans-aconitate 2-methyltransferase, found in Methylobacterium nodulans (strain LMG 21967 / CNCM I-2342 / ORS 2060).